Consider the following 54-residue polypeptide: UPF0391 membrane protein PFL_0093 (54 aa).

2 helical membrane-spanning segments follow: residues 4–24 (WAIT…GGIA) and 29–49 (GIAK…FFFG).

Belongs to the UPF0391 family.

It localises to the cell membrane. This Pseudomonas fluorescens (strain ATCC BAA-477 / NRRL B-23932 / Pf-5) protein is UPF0391 membrane protein PFL_0093.